We begin with the raw amino-acid sequence, 321 residues long: uncharacterized protein (321 aa).

Positions 1 to 18 are cleaved as a signal peptide; sequence MKKMKKLLLLLSASFAFS.

This is an uncharacterized protein from Aquifex aeolicus (strain VF5).